The chain runs to 133 residues: Ribonuclease P protein component (133 aa).

This sequence belongs to the RnpA family. As to quaternary structure, consists of a catalytic RNA component (M1 or rnpB) and a protein subunit.

It catalyses the reaction Endonucleolytic cleavage of RNA, removing 5'-extranucleotides from tRNA precursor.. Functionally, RNaseP catalyzes the removal of the 5'-leader sequence from pre-tRNA to produce the mature 5'-terminus. It can also cleave other RNA substrates such as 4.5S RNA. The protein component plays an auxiliary but essential role in vivo by binding to the 5'-leader sequence and broadening the substrate specificity of the ribozyme. The sequence is that of Ribonuclease P protein component from Pseudomonas savastanoi pv. phaseolicola (strain 1448A / Race 6) (Pseudomonas syringae pv. phaseolicola (strain 1448A / Race 6)).